Here is a 430-residue protein sequence, read N- to C-terminus: Serine hydroxymethyltransferase 1 (430 aa).

(6S)-5,6,7,8-tetrahydrofolate is bound by residues Leu132 and 136-138 (GHL). Position 241 is an N6-(pyridoxal phosphate)lysine (Lys241).

This sequence belongs to the SHMT family. In terms of assembly, homodimer. Pyridoxal 5'-phosphate is required as a cofactor.

The protein resides in the cytoplasm. It catalyses the reaction (6R)-5,10-methylene-5,6,7,8-tetrahydrofolate + glycine + H2O = (6S)-5,6,7,8-tetrahydrofolate + L-serine. It participates in one-carbon metabolism; tetrahydrofolate interconversion. Its pathway is amino-acid biosynthesis; glycine biosynthesis; glycine from L-serine: step 1/1. Catalyzes the reversible interconversion of serine and glycine with tetrahydrofolate (THF) serving as the one-carbon carrier. This reaction serves as the major source of one-carbon groups required for the biosynthesis of purines, thymidylate, methionine, and other important biomolecules. Also exhibits THF-independent aldolase activity toward beta-hydroxyamino acids, producing glycine and aldehydes, via a retro-aldol mechanism. This is Serine hydroxymethyltransferase 1 from Bordetella parapertussis (strain 12822 / ATCC BAA-587 / NCTC 13253).